The sequence spans 538 residues: CTP synthase (538 aa).

The tract at residues Met1–Leu267 is amidoligase domain. Residue Ser15 coordinates CTP. Residue Ser15 participates in UTP binding. ATP-binding positions include Ser16–Ile21 and Asp73. Positions 73 and 141 each coordinate Mg(2+). CTP-binding positions include Asp148–Glu150, Lys188–Gln193, and Lys224. UTP is bound by residues Lys188–Gln193 and Lys224. In terms of domain architecture, Glutamine amidotransferase type-1 spans Lys292 to Ser538. Gly351 is an L-glutamine binding site. The Nucleophile; for glutamine hydrolysis role is filled by Cys378. Residues Leu379–Gln382, Glu402, and Arg469 contribute to the L-glutamine site. Active-site residues include His513 and Glu515.

The protein belongs to the CTP synthase family. Homotetramer.

It catalyses the reaction UTP + L-glutamine + ATP + H2O = CTP + L-glutamate + ADP + phosphate + 2 H(+). The catalysed reaction is L-glutamine + H2O = L-glutamate + NH4(+). It carries out the reaction UTP + NH4(+) + ATP = CTP + ADP + phosphate + 2 H(+). Its pathway is pyrimidine metabolism; CTP biosynthesis via de novo pathway; CTP from UDP: step 2/2. Its activity is regulated as follows. Allosterically activated by GTP, when glutamine is the substrate; GTP has no effect on the reaction when ammonia is the substrate. The allosteric effector GTP functions by stabilizing the protein conformation that binds the tetrahedral intermediate(s) formed during glutamine hydrolysis. Inhibited by the product CTP, via allosteric rather than competitive inhibition. In terms of biological role, catalyzes the ATP-dependent amination of UTP to CTP with either L-glutamine or ammonia as the source of nitrogen. Regulates intracellular CTP levels through interactions with the four ribonucleotide triphosphates. This Helicobacter pylori (strain ATCC 700392 / 26695) (Campylobacter pylori) protein is CTP synthase.